The chain runs to 559 residues: Potassium-transporting ATPase potassium-binding subunit (559 aa).

Transmembrane regions (helical) follow at residues 7–27, 63–83, 132–152, 170–190, 253–273, 283–303, 327–347, 356–376, 379–399, 416–436, 484–504, and 524–544; these read LLIA…GSGL, LLAL…LLFW, GLTV…FALI, LVRI…LFFI, MVQM…FGEA, LLWA…WAEV, FGVL…CGAV, ALGG…FGGV, GLYG…LMIG, MTAL…ALAM, LLAF…MAIA, and GALF…LTFI.

This sequence belongs to the KdpA family. The system is composed of three essential subunits: KdpA, KdpB and KdpC.

The protein localises to the cell inner membrane. Part of the high-affinity ATP-driven potassium transport (or Kdp) system, which catalyzes the hydrolysis of ATP coupled with the electrogenic transport of potassium into the cytoplasm. This subunit binds the periplasmic potassium ions and delivers the ions to the membrane domain of KdpB through an intramembrane tunnel. This chain is Potassium-transporting ATPase potassium-binding subunit, found in Salmonella arizonae (strain ATCC BAA-731 / CDC346-86 / RSK2980).